A 421-amino-acid polypeptide reads, in one-letter code: Threonine--tRNA ligase editing subunit (421 aa).

This sequence belongs to the class-II aminoacyl-tRNA synthetase family. Archaea-specific ThrRS editing domain subfamily. Probably interacts with its catalytic subunit.

The protein resides in the cytoplasm. Functionally, freestanding tRNA editing subunit of threonine--tRNA ligase, the catalytic subunit is probably AC Q9YDW0. Deacylates (edits) mischarged L-seryl-tRNA(Thr) in trans; has no activity on correctly charged L-threonyl-tRNA(Thr). Probably does not aminoacylate tRNA(Thr). Deacylates correctly charged glycyl-tRNA(Gly), but not glycyl-tRNA(Gly)(2'-dA76) (the terminal 2'-OH of tRNA adenine 76 has been dehydroxylated) nor the 2'-fluoro tRNA derivative, strongly suggesting the editing function is catalyzed by the 2'-OH of A76 of tRNA(Thr). The protein is Threonine--tRNA ligase editing subunit (thrS2) of Aeropyrum pernix (strain ATCC 700893 / DSM 11879 / JCM 9820 / NBRC 100138 / K1).